We begin with the raw amino-acid sequence, 309 residues long: Probable nitrogen assimilation transcriptional activator (309 aa).

The region spanning 1–57 (MRLEQLQAALRVAETGSFQEAAQKVGCNQSTISRQVKGLEDELGIALFRRQGRMKLT) is the HTH lysR-type domain. Positions 18–37 (FQEAAQKVGCNQSTISRQVK) form a DNA-binding region, H-T-H motif.

This sequence belongs to the LysR transcriptional regulatory family.

Functionally, seems to regulate utilization of fixed nitrogen by controlling the expression of a certain gene(s) involved in nitrogen metabolism. The polypeptide is Probable nitrogen assimilation transcriptional activator (ntcB) (Synechococcus elongatus (strain ATCC 33912 / PCC 7942 / FACHB-805) (Anacystis nidulans R2)).